The sequence spans 533 residues: Probable bifunctional tRNA threonylcarbamoyladenosine biosynthesis protein (533 aa).

A kae1 region spans residues 1–328 (MRILGIEGTA…FRPDAVTVTW (328 aa)). Residues H112 and H116 each contribute to the Fe cation site. L-threonylcarbamoyladenylate is bound by residues 133–137 (NASGA), D165, G178, E182, and N261. D289 is a binding site for Fe cation. Positions 339–533 (PATLDKTPVR…RDIESRGRYH (195 aa)) constitute a Protein kinase domain. ATP-binding positions include 347 to 354 (VRGAEAIV) and K363. D452 serves as the catalytic Proton acceptor; for kinase activity.

It in the N-terminal section; belongs to the KAE1 / TsaD family. The protein in the C-terminal section; belongs to the protein kinase superfamily. Tyr protein kinase family. BUD32 subfamily. Component of the KEOPS complex that consists of Kae1, Bud32, Cgi121 and Pcc1; the whole complex dimerizes. Fe(2+) serves as cofactor.

Its subcellular location is the cytoplasm. It catalyses the reaction L-seryl-[protein] + ATP = O-phospho-L-seryl-[protein] + ADP + H(+). The enzyme catalyses L-threonyl-[protein] + ATP = O-phospho-L-threonyl-[protein] + ADP + H(+). It carries out the reaction L-threonylcarbamoyladenylate + adenosine(37) in tRNA = N(6)-L-threonylcarbamoyladenosine(37) in tRNA + AMP + H(+). Its function is as follows. Required for the formation of a threonylcarbamoyl group on adenosine at position 37 (t(6)A37) in tRNAs that read codons beginning with adenine. Is a component of the KEOPS complex that is probably involved in the transfer of the threonylcarbamoyl moiety of threonylcarbamoyl-AMP (TC-AMP) to the N6 group of A37. The Kae1 domain likely plays a direct catalytic role in this reaction. The Bud32 domain probably displays kinase activity that regulates Kae1 function. The polypeptide is Probable bifunctional tRNA threonylcarbamoyladenosine biosynthesis protein (Haloquadratum walsbyi (strain DSM 16790 / HBSQ001)).